Consider the following 242-residue polypeptide: Probable transcriptional regulatory protein EF_0663 (242 aa).

Positions 1 to 14 are enriched in polar residues; it reads MSGHSKWSNIQGRK. The tract at residues 1–22 is disordered; it reads MSGHSKWSNIQGRKNAQDAKRG.

It belongs to the TACO1 family.

It localises to the cytoplasm. This Enterococcus faecalis (strain ATCC 700802 / V583) protein is Probable transcriptional regulatory protein EF_0663.